We begin with the raw amino-acid sequence, 320 residues long: Thymidine kinase (320 aa).

An ATP-binding site is contributed by 10-17; it reads GAYDTGKS. Glutamate 33 serves as the catalytic Proton acceptor. Residues tyrosine 51 and glutamine 75 each coordinate substrate. Residue arginine 162 coordinates ATP. Arginine 168 is a substrate binding site.

This sequence belongs to the herpesviridae thymidine kinase family. As to quaternary structure, homodimer.

The enzyme catalyses thymidine + ATP = dTMP + ADP + H(+). Catalyzes the transfer of the gamma-phospho group of ATP to thymidine to generate dTMP in the salvage pathway of pyrimidine synthesis. The dTMP serves as a substrate for DNA polymerase during viral DNA replication. Allows the virus to be reactivated and to grow in non-proliferative cells lacking a high concentration of phosphorylated nucleic acid precursors. The chain is Thymidine kinase from Suid herpesvirus 1 (strain NIA-3) (SuHV-1).